Here is a 562-residue protein sequence, read N- to C-terminus: Dihydroxy-acid dehydratase (562 aa).

Position 80 (aspartate 80) interacts with Mg(2+). Position 121 (cysteine 121) interacts with [2Fe-2S] cluster. Mg(2+) is bound by residues aspartate 122 and lysine 123. Position 123 is an N6-carboxylysine (lysine 123). Cysteine 194 contributes to the [2Fe-2S] cluster binding site. Position 446 (glutamate 446) interacts with Mg(2+). Serine 472 (proton acceptor) is an active-site residue.

This sequence belongs to the IlvD/Edd family. In terms of assembly, homodimer. It depends on [2Fe-2S] cluster as a cofactor. Mg(2+) serves as cofactor.

The enzyme catalyses (2R)-2,3-dihydroxy-3-methylbutanoate = 3-methyl-2-oxobutanoate + H2O. It carries out the reaction (2R,3R)-2,3-dihydroxy-3-methylpentanoate = (S)-3-methyl-2-oxopentanoate + H2O. It participates in amino-acid biosynthesis; L-isoleucine biosynthesis; L-isoleucine from 2-oxobutanoate: step 3/4. The protein operates within amino-acid biosynthesis; L-valine biosynthesis; L-valine from pyruvate: step 3/4. In terms of biological role, functions in the biosynthesis of branched-chain amino acids. Catalyzes the dehydration of (2R,3R)-2,3-dihydroxy-3-methylpentanoate (2,3-dihydroxy-3-methylvalerate) into 2-oxo-3-methylpentanoate (2-oxo-3-methylvalerate) and of (2R)-2,3-dihydroxy-3-methylbutanoate (2,3-dihydroxyisovalerate) into 2-oxo-3-methylbutanoate (2-oxoisovalerate), the penultimate precursor to L-isoleucine and L-valine, respectively. This is Dihydroxy-acid dehydratase from Staphylococcus aureus (strain bovine RF122 / ET3-1).